The following is an 83-amino-acid chain: MKAAILLAFAGLALLSVICHASENVEQDSFEEVFSAIFAMEDDLKPKERVCRGYGLPCTPEKNDCCQRLYCSQHRLCSVKAGK.

The signal sequence occupies residues 1 to 21 (MKAAILLAFAGLALLSVICHA). A propeptide spanning residues 22–49 (SENVEQDSFEEVFSAIFAMEDDLKPKER) is cleaved from the precursor. Disulfide bonds link cysteine 51–cysteine 66, cysteine 58–cysteine 71, and cysteine 65–cysteine 77. An Alanine amide modification is found at alanine 81.

This sequence belongs to the neurotoxin 10 (Hwtx-1) family. 66 (Jztx-24) subfamily. Expressed by the venom gland.

It is found in the secreted. Functionally, probable ion channel inhibitor. This Chilobrachys guangxiensis (Chinese earth tiger tarantula) protein is U15-theraphotoxin-Cg1a.